Reading from the N-terminus, the 2153-residue chain is RNA-directed RNA polymerase L (2153 aa).

Mn(2+)-binding residues include His36, Glu54, Asp97, Glu110, and Val111. The active-site For endonuclease activity is Lys124. Positions 957–1143 constitute a RdRp catalytic domain; the sequence is TGNVIKFKRR…AVNQEMWKSM (187 aa). Position 1100 (Asp1100) interacts with Mg(2+). The segment at 1291 to 2153 is interaction with the viral nucleoprotein; it reads KQAFYSYKHT…FPHDPVSSFY (863 aa).

The protein belongs to the Bunyavirales RNA polymerase family. In terms of assembly, interacts with the viral nucleoprotein; this interaction is required for RdRp function. It depends on Mn(2+) as a cofactor. The cofactor is Mg(2+).

It localises to the host cytoplasm. The protein resides in the host perinuclear region. The catalysed reaction is RNA(n) + a ribonucleoside 5'-triphosphate = RNA(n+1) + diphosphate. Functionally, RNA-dependent RNA polymerase, which is responsible for the replication and transcription of the viral RNA genome using antigenomic RNA as an intermediate. During transcription, synthesizes subgenomic RNAs and assures their capping by a cap-snatching mechanism, which involves the endonuclease activity cleaving the host capped pre-mRNAs. These short capped RNAs are then used as primers for viral transcription. Cleaves ssRNA substrates but not DNA. Seems to downregulate the expression of its own and heterologous mRNAs through its endonuclease activity. The chain is RNA-directed RNA polymerase L from Sin Nombre orthohantavirus (SNV).